The chain runs to 367 residues: Splicing factor U2AF-associated protein 2 (367 aa).

The tract at residues 36–104 (YDPNSLKMNK…SKSENSEASP (69 aa)) is disordered. Over residues 61 to 78 (TEGKESSNGEDRHTKRLY) the composition is skewed to basic and acidic residues. RRM domains are found at residues 112 to 193 (VYIQ…KMRV) and 268 to 329 (LLID…VVEA).

Belongs to the HTATSF1 family. In terms of assembly, interacts with the U2AF large and U2AF small subunits.

Functionally, has a role in pre-mRNA splicing. This chain is Splicing factor U2AF-associated protein 2 (uap2), found in Schizosaccharomyces pombe (strain 972 / ATCC 24843) (Fission yeast).